A 196-amino-acid chain; its full sequence is MIPVVIEQTSRGERSYDIYSRLLKDRIIMLTGPVEDSMANSVIAQLLFLDAQDSTKDIYLYVNTPGGSVSAGLAIVDTMNFIKADVQTIVMGMAASMGTVIASSGAKGKRFMLPNAEYMIHQPMGGTGGGTQQTDMAIAAEHLLKTRNTLEKILAENSGQSMEKVHADAERDNWMSAQETLEYGFIDEIMANNSLN.

Ser96 (nucleophile) is an active-site residue. The active site involves His121.

Belongs to the peptidase S14 family. As to quaternary structure, fourteen ClpP subunits assemble into 2 heptameric rings which stack back to back to give a disk-like structure with a central cavity, resembling the structure of eukaryotic proteasomes.

Its subcellular location is the cytoplasm. It carries out the reaction Hydrolysis of proteins to small peptides in the presence of ATP and magnesium. alpha-casein is the usual test substrate. In the absence of ATP, only oligopeptides shorter than five residues are hydrolyzed (such as succinyl-Leu-Tyr-|-NHMec, and Leu-Tyr-Leu-|-Tyr-Trp, in which cleavage of the -Tyr-|-Leu- and -Tyr-|-Trp bonds also occurs).. Functionally, cleaves peptides in various proteins in a process that requires ATP hydrolysis. Has a chymotrypsin-like activity. Plays a major role in the degradation of misfolded proteins. This chain is ATP-dependent Clp protease proteolytic subunit, found in Streptococcus pneumoniae (strain 70585).